The chain runs to 621 residues: F-box/LRR-repeat protein 4 (621 aa).

Residue Arg-28 is modified to Asymmetric dimethylarginine. One can recognise an F-box domain in the interval 277–332; sequence NGYFDKLPYELIQLILNHLSLPDLCRLAQTCRLLHQHCCDPLQYIHLNLQPYWARL. LRR repeat units lie at residues 376–397, 402–421, 427–448, 452–474, 480–501, 504–524, 532–558, 559–583, and 584–609; these read ELVR…EVIS, NLQD…AFGH, SLKR…SILN, ELQH…ASMI, NLRT…AELA, CVLL…STGC, LPNL…ASNC, TRLQ…LLES, and CKDL…LNAS.

Part of a SCF (SKP1-CUL1-F-box) protein ligase complex. Interacts with FAF2 and VCP. Interacts with PPTC7; this interaction promotes destruction of BNIP3 and NIX and mitophagy suppression.

The protein localises to the cytoplasm. It localises to the nucleus. The protein resides in the mitochondrion outer membrane. Functionally, substrate-recognition component of the mitochondria-localized SCF-FBXL4 ubiquitin E3 ligase complex that plays a role in the restriction of mitophagy by controlling the degradation of BNIP3 and NIX mitophagy receptors. Also rescues mitochondrial injury through reverting hyperactivation of DRP1-mediated mitochondrial fission. The chain is F-box/LRR-repeat protein 4 (Fbxl4) from Mus musculus (Mouse).